The following is a 303-amino-acid chain: MADKSKFIEYIDEALEKSKETALSHLFFTYQGIPYPITMCTSETFQALDTFEARHDDIVLASYPKCGSNWILHIVSELIYAVSKKKYEYPEFPVLECGDSEKYQRMKGFPSPRILATHLHYDKLPGSIFKNKAKILVIFRNPKDTAVSFFHFHNDVPDIPSYGSWDEFFRQLMKGQVSWGSYFDFAINWNKHLDGDNVKFILYEDLKENLAAGIKQIAEFLGFFLTGEQIQTISVQSTFQAMRAKSQDTHGAVGPFLFRKGEVGDWKNLFGEIQNQEMDEKFKECLAGTSLGAKLKYESYCQG.

Position 65 to 70 (lysine 65 to tryptophan 70) interacts with 3'-phosphoadenylyl sulfate. Histidine 118 acts as the Proton acceptor in catalysis. Residues arginine 140, serine 148, tyrosine 203, serine 237–methionine 242, and arginine 259–glycine 261 each bind 3'-phosphoadenylyl sulfate.

It belongs to the sulfotransferase 1 family.

It is found in the cytoplasm. It localises to the cytosol. The catalysed reaction is thyroxine + 3'-phosphoadenylyl sulfate = thyroxine sulfate + adenosine 3',5'-bisphosphate + H(+). Functionally, sulfotransferase that utilizes 3'-phospho-5'-adenylyl sulfate (PAPS) as sulfonate donor to catalyze the sulfate conjugation of thyroxine. Involved in the metabolism of thyroxine. In Pan troglodytes (Chimpanzee), this protein is Sulfotransferase 6B1 (SULT6B1).